The chain runs to 142 residues: Large ribosomal subunit protein uL13 (142 aa).

The protein belongs to the universal ribosomal protein uL13 family. Part of the 50S ribosomal subunit.

This protein is one of the early assembly proteins of the 50S ribosomal subunit, although it is not seen to bind rRNA by itself. It is important during the early stages of 50S assembly. The sequence is that of Large ribosomal subunit protein uL13 from Shigella boydii serotype 18 (strain CDC 3083-94 / BS512).